The following is a 704-amino-acid chain: D-(-)-3-hydroxybutyrate oligomer hydrolase (704 aa).

The first 31 residues, 1–31, serve as a signal peptide directing secretion; that stretch reads MTTTNRNNLKLTALTAAVLTLSACGGSDAVA. The active-site Charge relay system is Ser309.

This sequence belongs to the D-(-)-3-hydroxybutyrate oligomer hydrolase family.

Its subcellular location is the secreted. The catalysed reaction is (3R)-hydroxybutanoate dimer + H2O = 2 (R)-3-hydroxybutanoate + H(+). Its pathway is lipid metabolism; butanoate metabolism. Participates in the degradation of poly-3-hydroxybutyrate (PHB). It works downstream of poly(3-hydroxybutyrate) depolymerase, hydrolyzing D(-)-3-hydroxybutyrate oligomers of various length (3HB-oligomers) into 3HB-monomers. In Albidiferax ferrireducens (strain ATCC BAA-621 / DSM 15236 / T118) (Rhodoferax ferrireducens), this protein is D-(-)-3-hydroxybutyrate oligomer hydrolase.